A 111-amino-acid polypeptide reads, in one-letter code: uncharacterized protein (111 aa).

A run of 2 helical transmembrane segments spans residues 7–29 (LYSSIMYVFFYIRIHTVFLRALY) and 49–71 (PSLLMLKIISTPLAFLIPNSINL).

The protein localises to the membrane. This is an uncharacterized protein from Saccharomyces cerevisiae (strain ATCC 204508 / S288c) (Baker's yeast).